We begin with the raw amino-acid sequence, 726 residues long: Catalase-peroxidase (726 aa).

A disordered region spans residues 1–34 (MSMSDDTHNSLSTGKCPFHQGSHDRSAGAGTSSH). The tryptophyl-tyrosyl-methioninium (Trp-Tyr) (with M-252) cross-link spans 105 to 226 (WHGAGTYRSV…LGATEMGLIY (122 aa)). H106 acts as the Proton acceptor in catalysis. The segment at residues 226-252 (YVNPEGPDHSGEPLSAAAAIRATFGNM) is a cross-link (tryptophyl-tyrosyl-methioninium (Tyr-Met) (with W-105)). H267 is a heme b binding site.

The protein belongs to the peroxidase family. Peroxidase/catalase subfamily. As to quaternary structure, homodimer or homotetramer. The cofactor is heme b. Formation of the three residue Trp-Tyr-Met cross-link is important for the catalase, but not the peroxidase activity of the enzyme.

The catalysed reaction is H2O2 + AH2 = A + 2 H2O. The enzyme catalyses 2 H2O2 = O2 + 2 H2O. Bifunctional enzyme with both catalase and broad-spectrum peroxidase activity. The chain is Catalase-peroxidase from Citrobacter koseri (strain ATCC BAA-895 / CDC 4225-83 / SGSC4696).